A 266-amino-acid polypeptide reads, in one-letter code: Small ribosomal subunit protein uS2 (266 aa).

The tract at residues 238-266 (EFASAPDAGKKGRQAQPKKGKRASDAAAE) is disordered. Over residues 248–258 (KGRQAQPKKGK) the composition is skewed to basic residues.

This sequence belongs to the universal ribosomal protein uS2 family.

This Xylella fastidiosa (strain M12) protein is Small ribosomal subunit protein uS2.